A 278-amino-acid chain; its full sequence is ADP-dependent (S)-NAD(P)H-hydrate dehydratase (278 aa).

The 268-residue stretch at 5–272 folds into the YjeF C-terminal domain; sequence TTEIVSRTII…TRIPTYMHRF (268 aa). Residues Ala40, Gly103, and His152 each contribute to the (6S)-NADPHX site. Gly214 lines the AMP pocket. (6S)-NADPHX is bound at residue Asp215.

This sequence belongs to the NnrD/CARKD family. In terms of assembly, homotetramer. It depends on Mg(2+) as a cofactor.

The enzyme catalyses (6S)-NADHX + ADP = AMP + phosphate + NADH + H(+). The catalysed reaction is (6S)-NADPHX + ADP = AMP + phosphate + NADPH + H(+). Catalyzes the dehydration of the S-form of NAD(P)HX at the expense of ADP, which is converted to AMP. Together with NAD(P)HX epimerase, which catalyzes the epimerization of the S- and R-forms, the enzyme allows the repair of both epimers of NAD(P)HX, a damaged form of NAD(P)H that is a result of enzymatic or heat-dependent hydration. In Lactiplantibacillus plantarum (strain ATCC BAA-793 / NCIMB 8826 / WCFS1) (Lactobacillus plantarum), this protein is ADP-dependent (S)-NAD(P)H-hydrate dehydratase.